A 1391-amino-acid polypeptide reads, in one-letter code: DNA-directed RNA polymerase subunit beta'' (1391 aa).

Positions 220, 291, 298, and 301 each coordinate Zn(2+).

Belongs to the RNA polymerase beta' chain family. RpoC2 subfamily. In terms of assembly, in plastids the minimal PEP RNA polymerase catalytic core is composed of four subunits: alpha, beta, beta', and beta''. When a (nuclear-encoded) sigma factor is associated with the core the holoenzyme is formed, which can initiate transcription. The cofactor is Zn(2+).

The protein resides in the plastid. It is found in the chloroplast. The enzyme catalyses RNA(n) + a ribonucleoside 5'-triphosphate = RNA(n+1) + diphosphate. Its function is as follows. DNA-dependent RNA polymerase catalyzes the transcription of DNA into RNA using the four ribonucleoside triphosphates as substrates. The chain is DNA-directed RNA polymerase subunit beta'' from Gossypium barbadense (Sea Island cotton).